The primary structure comprises 309 residues: Ribosomal RNA small subunit methyltransferase H (309 aa).

Residues 39–41 (GGH), Asp59, Phe83, Asp100, and Gln107 each bind S-adenosyl-L-methionine.

This sequence belongs to the methyltransferase superfamily. RsmH family.

Its subcellular location is the cytoplasm. The enzyme catalyses cytidine(1402) in 16S rRNA + S-adenosyl-L-methionine = N(4)-methylcytidine(1402) in 16S rRNA + S-adenosyl-L-homocysteine + H(+). Functionally, specifically methylates the N4 position of cytidine in position 1402 (C1402) of 16S rRNA. This is Ribosomal RNA small subunit methyltransferase H from Delftia acidovorans (strain DSM 14801 / SPH-1).